A 425-amino-acid chain; its full sequence is GTPase Obg (425 aa).

An Obg domain is found at 1–158; sequence MFVDQVKVYV…RYIVMELKLI (158 aa). The interval 118–144 is disordered; sequence KGGRGGRGNNRFANSSNPAPHISENGE. An OBG-type G domain is found at 159 to 327; sequence ADVGLVGYPS…LMYAIGDTLA (169 aa). ATP-binding positions include 165–172, 190–194, 211–214, 281–284, and 308–310; these read GYPSVGKS, FTTLT, DLPG, NKME, and SAA. Positions 172 and 192 each coordinate Mg(2+). The OCT domain occupies 348–425; it reads RAEKEPDAFE…IGKLEFDFVE (78 aa).

Belongs to the TRAFAC class OBG-HflX-like GTPase superfamily. OBG GTPase family. Monomer. The cofactor is Mg(2+).

The protein localises to the cytoplasm. An essential GTPase which binds GTP, GDP and possibly (p)ppGpp with moderate affinity, with high nucleotide exchange rates and a fairly low GTP hydrolysis rate. Plays a role in control of the cell cycle, stress response, ribosome biogenesis and in those bacteria that undergo differentiation, in morphogenesis control. The polypeptide is GTPase Obg (Brevibacillus brevis (strain 47 / JCM 6285 / NBRC 100599)).